We begin with the raw amino-acid sequence, 660 residues long: MTTIIELPEVLANQIAAGEVIERPASVVKELVENAIDAKSSQITVEIEESGLKMIQITDNGEGMSHEDLPLSLRRHATSKIKSQSDLFRIRTLGFRGEALPSVASISKLTIKTATADAEHGSILVASGGKIEQLEAVSTPVGTKIKVENLFYNTPARLKYMKSLQAELAHVVDVVNRLSLAHPEIAFTLISDGKQLTQTSGAGDLRQALAGIYGLNTAKKMIDISSADLDFEVGGFVSLPELTRANRNYITILINGRYIKNFLLNRAILDGYGSKLMVGRFPIAVIDIQIDPYLADVNVHPTKQEIRISKERELMALISTAISESLREQDLIPDALENLARSSTRSFSKPEQTSLPLQPSQLYYDPQKNDFFTKETVVSEDSPQGFNHETLVDSGVKQVDNLQLAKTESEAAAPSVKYASRPDPMLSDGEHPGLDVHNKQKLSQMLDRLENEEQSVFPELDYFGQMHGTYLFAQGRDGLFIIDQHAAQERVKYEYYRDKIGEVDNSLQQLLVPYLFEFSGSDFINLQEKMSLLNEVGIYLEPYGNHTFILREHPIWMKEAEIESGVYEMCDMLLLTNEVSIKTYRAELAIMMSCKRSIKANHSLDDYSARQLLLQLAQCKNPYNCPHGRPVLINFSKADMEKMFRRIQENHTSLRELGKY.

The protein belongs to the DNA mismatch repair MutL/HexB family.

Functionally, this protein is involved in the repair of mismatches in DNA. It is required for dam-dependent methyl-directed DNA mismatch repair. May act as a 'molecular matchmaker', a protein that promotes the formation of a stable complex between two or more DNA-binding proteins in an ATP-dependent manner without itself being part of a final effector complex. This is DNA mismatch repair protein MutL from Streptococcus equi subsp. equi (strain 4047).